The sequence spans 185 residues: Putative RNA (cytidine(34)-2'-O)-methyltransferase (185 aa).

Positions 80, 105, and 126 each coordinate S-adenosyl-L-methionine.

It belongs to the class IV-like SAM-binding methyltransferase superfamily. RNA methyltransferase TrmH family. TrmL subfamily.

The protein resides in the cytoplasm. The enzyme catalyses cytidine(34) in tRNA + S-adenosyl-L-methionine = 2'-O-methylcytidine(34) in tRNA + S-adenosyl-L-homocysteine + H(+). It carries out the reaction 5-carboxymethylaminomethyluridine(34) in tRNA(Leu) + S-adenosyl-L-methionine = 5-carboxymethylaminomethyl-2'-O-methyluridine(34) in tRNA(Leu) + S-adenosyl-L-homocysteine + H(+). Its function is as follows. Could methylate the ribose at the nucleotide 34 wobble position in tRNA. The protein is Putative RNA (cytidine(34)-2'-O)-methyltransferase of Lactobacillus gasseri (strain ATCC 33323 / DSM 20243 / BCRC 14619 / CIP 102991 / JCM 1131 / KCTC 3163 / NCIMB 11718 / NCTC 13722 / AM63).